A 151-amino-acid polypeptide reads, in one-letter code: Deoxyuridine 5'-triphosphate nucleotidohydrolase (151 aa).

Residues 70–72 (RSG), N83, 87–89 (LID), and M97 contribute to the substrate site.

This sequence belongs to the dUTPase family. The cofactor is Mg(2+).

It carries out the reaction dUTP + H2O = dUMP + diphosphate + H(+). It functions in the pathway pyrimidine metabolism; dUMP biosynthesis; dUMP from dCTP (dUTP route): step 2/2. Its function is as follows. This enzyme is involved in nucleotide metabolism: it produces dUMP, the immediate precursor of thymidine nucleotides and it decreases the intracellular concentration of dUTP so that uracil cannot be incorporated into DNA. The sequence is that of Deoxyuridine 5'-triphosphate nucleotidohydrolase from Glaesserella parasuis serovar 5 (strain SH0165) (Haemophilus parasuis).